The sequence spans 503 residues: MGSEATTAVNNLQQPLLESTKSEADFRMESVLTDTHLSYFRRIYLASLIEMKYLFHLAAPAIFVYVINNGMSMLTRIFAGRLGSMQLAAASLGNSGFNMFTLGLMLGMGSAVETLCGQAHGAHRYDMLGVYLQRSTIVLVITGLPMTLLFIFSKPLLISLGEPADVASVASVFVYGMIPMIFAYAVNFPIQKFLQSQSIVTPSAYISAATLVIHLILSWLSVFKFGWGLLGLSVVHSLSWWIIVLAQIIYIKISPRCRRTWDGFSWKAFDGLWDFFQLSAASAVMLCLESWYSQILVLLAGLLKDPELALDSLAICMSISAMSFMVSVGFNAAASVRVSNELGAGNPRSAAFSTAVTTGVSFLLSLFEAIVILSWRHVISYIFTDSPAVAEAVAELSPFLAITIVLNGVQPVLSGVAVGCGWQAYVAYVNIGCYYIVGIPIGYVLGFTYDMGARGIWTGMIGGTLMQTIILVIVTFRTDWDKEVEKASRRLDQWEDTSPLLKQ.

12 helical membrane passes run 54-74 (LFHL…MSML), 87-107 (LAAA…LMLG), 137-157 (IVLV…KPLL), 166-186 (VASV…AYAV), 203-223 (SAYI…LSVF), 225-245 (FGWG…IIVL), 271-293 (GLWD…SWYS), 313-333 (LAIC…FNAA), 355-375 (AVTT…ILSW), 399-419 (FLAI…VAVG), 427-447 (AYVN…VLGF), and 456-476 (IWTG…IVTF).

Belongs to the multi antimicrobial extrusion (MATE) (TC 2.A.66.1) family.

It localises to the membrane. This Arabidopsis thaliana (Mouse-ear cress) protein is Protein DETOXIFICATION 36.